A 152-amino-acid chain; its full sequence is Deoxyuridine 5'-triphosphate nucleotidohydrolase (152 aa).

Residues 71–73 (RSG), N84, 88–90 (LID), and M98 contribute to the substrate site.

The protein belongs to the dUTPase family. Mg(2+) is required as a cofactor.

It carries out the reaction dUTP + H2O = dUMP + diphosphate + H(+). It functions in the pathway pyrimidine metabolism; dUMP biosynthesis; dUMP from dCTP (dUTP route): step 2/2. This enzyme is involved in nucleotide metabolism: it produces dUMP, the immediate precursor of thymidine nucleotides and it decreases the intracellular concentration of dUTP so that uracil cannot be incorporated into DNA. This Shewanella pealeana (strain ATCC 700345 / ANG-SQ1) protein is Deoxyuridine 5'-triphosphate nucleotidohydrolase.